A 91-amino-acid polypeptide reads, in one-letter code: Small ribosomal subunit protein bS20 (91 aa).

The tract at residues Met1–Arg25 is disordered. Basic residues predominate over residues Ala7 to His20.

It belongs to the bacterial ribosomal protein bS20 family.

In terms of biological role, binds directly to 16S ribosomal RNA. The protein is Small ribosomal subunit protein bS20 of Azotobacter vinelandii (strain DJ / ATCC BAA-1303).